We begin with the raw amino-acid sequence, 117 residues long: Large ribosomal subunit protein bL20c (117 aa).

Belongs to the bacterial ribosomal protein bL20 family.

Its subcellular location is the plastid. It is found in the chloroplast. Its function is as follows. Binds directly to 23S ribosomal RNA and is necessary for the in vitro assembly process of the 50S ribosomal subunit. It is not involved in the protein synthesizing functions of that subunit. The polypeptide is Large ribosomal subunit protein bL20c (Lobularia maritima (Sweet alyssum)).